Consider the following 211-residue polypeptide: Cell division protein SepF (211 aa).

The segment covering 15 to 26 (DTDEVNEVEEEV) has biased composition (acidic residues). A disordered region spans residues 15–111 (DTDEVNEVEE…ETYQAQTTVQ (97 aa)). Polar residues-rich tracts occupy residues 44–57 (IPSQ…QNPA), 64–81 (ARSQ…PNRQ), and 91–111 (RESV…TTVQ).

It belongs to the SepF family. As to quaternary structure, homodimer. Interacts with FtsZ.

It localises to the cytoplasm. In terms of biological role, cell division protein that is part of the divisome complex and is recruited early to the Z-ring. Probably stimulates Z-ring formation, perhaps through the cross-linking of FtsZ protofilaments. Its function overlaps with FtsA. The polypeptide is Cell division protein SepF (Streptococcus uberis (strain ATCC BAA-854 / 0140J)).